Reading from the N-terminus, the 103-residue chain is Large ribosomal subunit protein bL21 (103 aa).

Belongs to the bacterial ribosomal protein bL21 family. In terms of assembly, part of the 50S ribosomal subunit. Contacts protein L20.

In terms of biological role, this protein binds to 23S rRNA in the presence of protein L20. In Bordetella avium (strain 197N), this protein is Large ribosomal subunit protein bL21.